A 1474-amino-acid chain; its full sequence is Alpha-2-macroglobulin (1474 aa).

A signal peptide spans 1-23; it reads MGKNKLLHPSLVLLLLVLLPTDA. A disulfide bridge links Cys48 with Cys86. 3 N-linked (GlcNAc...) asparagine glycosylation sites follow: Asn55, Asn70, and Asn247. 2 disulfide bridges follow: Cys251–Cys299 and Cys269–Cys287. Residues Asn396 and Asn410 are each glycosylated (N-linked (GlcNAc...) asparagine). 8 disulfide bridges follow: Cys470–Cys563, Cys595–Cys771, Cys642–Cys689, Cys821–Cys849, Cys847–Cys883, Cys921–Cys1321, Cys1079–Cys1127, and Cys1352–Cys1467. Residues 690–728 are bait region; that stretch reads PQLQQYEMHGPEGLRVGFYESDVMGRGHARLVHAEEPPT. Isoglutamyl lysine isopeptide (Gln-Lys) (interchain with K-? in other proteins) cross-links involve residues Gln693 and Gln694. Inhibitory regions lie at residues 704-709, 719-723, and 730-735; these read RVGFYE, RLVHA, and TVRKYF. Asn869 carries N-linked (GlcNAc...) asparagine glycosylation. The segment at residues 972–975 is a cross-link (isoglutamyl cysteine thioester (Cys-Gln)); it reads CGEQ. Asn991 carries N-linked (GlcNAc...) asparagine glycosylation. An N-linked (GlcNAc...) asparagine glycan is attached at Asn1424.

This sequence belongs to the protease inhibitor I39 (alpha-2-macroglobulin) family. As to quaternary structure, homotetramer; disulfide-linked. Plasma.

It localises to the secreted. In terms of biological role, is able to inhibit all four classes of proteinases by a unique 'trapping' mechanism. This protein has a peptide stretch, called the 'bait region' which contains specific cleavage sites for different proteinases. When a proteinase cleaves the bait region, a conformational change is induced in the protein which traps the proteinase. The entrapped enzyme remains active against low molecular weight substrates (activity against high molecular weight substrates is greatly reduced). Following cleavage in the bait region a thioester bond is hydrolyzed and mediates the covalent binding of the protein to the proteinase. The chain is Alpha-2-macroglobulin (A2M) from Pongo abelii (Sumatran orangutan).